The primary structure comprises 541 residues: Acyl-CoA ligase M9 (541 aa).

Residue 186 to 197 (AMSTSGTTGLPK) participates in AMP binding. The interval 445–519 (ELEAVLHQMP…DSLPRNSSGK (75 aa)) is AMP-binding.

It belongs to the ATP-dependent AMP-binding enzyme family.

The protein operates within secondary metabolite biosynthesis. Functionally, acyl-CoA ligase; part of the gene cluster that mediates the biosynthesis of squalestatin S1 (SQS1, also known as zaragozic acid A), a heavily oxidized fungal polyketide that offers potent cholesterol lowering activity by targeting squalene synthase (SS). SQS1 is composed of a 2,8-dioxobicyclic[3.2.1]octane-3,4,5-tricarboxyclic acid core that is connected to two lipophilic polyketide arms. These initial steps feature the priming of an unusual benzoic acid starter unit onto the highly reducing polyketide synthase pks2, followed by oxaloacetate extension and product release to generate a tricarboxylic acid containing product. The phenylalanine ammonia lyase (PAL) M7 and the acyl-CoA ligase M9 are involved in transforming phenylalanine into benzoyl-CoA. The citrate synthase-like protein R3 is involved in connecting the C-alpha-carbons of the hexaketide chain and oxaloacetate to afford the tricarboxylic acid unit. The potential hydrolytic enzymes, M8 and M10, are in close proximity to pks2 and may participate in product release. On the other side, the tetraketide arm is synthesized by a the squalestatin tetraketide synthase pks1 and enzymatically esterified to the core in the last biosynthetic step, by the acetyltransferase M4. The biosynthesis of the tetraketide must involve 3 rounds of chain extension. After the first and second rounds methyl-transfer occurs, and in all rounds of extension the ketoreductase and dehydratase are active. The enoyl reductase and C-MeT of pks1 are not active in the final round of extension. The acetyltransferase M4 appears to have a broad substrate selectivity for its acyl CoA substrate, allowing the in vitro synthesis of novel squalestatins. The biosynthesis of SQS1 requires several oxidative steps likely performed by oxidoreductases M1, R1 and R2. Finally, in support of the identification of the cluster as being responsible for SQS1 production, the cluster contains a gene encoding a putative squalene synthase (SS) R6, suggesting a likely mechanism for self-resistance. The chain is Acyl-CoA ligase M9 from Phoma sp. (strain ATCC 20986 / MF5453).